A 151-amino-acid polypeptide reads, in one-letter code: Phospholipase A2 inhibitor BjussuMIP (151 aa).

Residues 1–4 (LANG) form the signal peptide. The 116-residue stretch at 31–146 (LKYAFLTVHK…CDENLLVVCE (116 aa)) folds into the C-type lectin domain. Intrachain disulfides connect Cys68/Cys145 and Cys123/Cys137. Asn107 is a glycosylation site (N-linked (GlcNAc...) asparagine).

This sequence belongs to the alpha-type phospholipase A2 inhibitor family. As to quaternary structure, oligomer. Expressed by the liver.

It localises to the secreted. Functionally, inhibits enzymatic, anticoagulant, edema formation, myotoxicity activities induced by snakes phospholipase A2. Is oligomeric, but it is probable that each of its subunits can bind and inactive a PLA2 molecule. In Bothrops jararacussu (Jararacussu), this protein is Phospholipase A2 inhibitor BjussuMIP.